Here is a 316-residue protein sequence, read N- to C-terminus: Probable cobalamin biosynthesis protein CobD (316 aa).

5 consecutive transmembrane segments (helical) span residues 1–21 (MITE…DIVL), 50–70 (ISGM…GFAL), 89–109 (ILAL…KSLI), 165–185 (PLFY…ALAF), and 294–314 (ISLI…LLIL).

The protein belongs to the CobD/CbiB family.

It localises to the cell membrane. The protein operates within cofactor biosynthesis; adenosylcobalamin biosynthesis. In terms of biological role, converts cobyric acid to cobinamide by the addition of aminopropanol on the F carboxylic group. The polypeptide is Probable cobalamin biosynthesis protein CobD (Methanothrix thermoacetophila (strain DSM 6194 / JCM 14653 / NBRC 101360 / PT) (Methanosaeta thermophila)).